The chain runs to 322 residues: Mitochondrial glutamate carrier 1 (322 aa).

3 Solcar repeats span residues 6 to 93 (ISLP…FRYQ), 101 to 214 (LTLF…LNEL), and 223 to 312 (SPFY…GIAE). Transmembrane regions (helical) follow at residues 12-32 (LING…IDLA), 62-82 (YFGM…EKAI), 107-127 (MLAG…MEML), 189-209 (GLGA…PLFA), 223-243 (SPFY…AVAV), and 292-312 (ALVI…GIAE).

Belongs to the mitochondrial carrier (TC 2.A.29) family.

It localises to the mitochondrion inner membrane. The enzyme catalyses L-glutamate(in) + H(+)(in) = L-glutamate(out) + H(+)(out). Its function is as follows. Mitochondrial glutamate/H(+) symporter. Responsible for the transport of glutamate from the cytosol into the mitochondrial matrix with the concomitant import of a proton. Plays a role in the control of glucose-stimulated insulin secretion. The polypeptide is Mitochondrial glutamate carrier 1 (SLC25A22) (Bos taurus (Bovine)).